We begin with the raw amino-acid sequence, 521 residues long: Probable glycogen synthase (521 aa).

The protein belongs to the glycosyltransferase 1 family. Bacterial/plant glycogen synthase subfamily.

It carries out the reaction [(1-&gt;4)-alpha-D-glucosyl](n) + ADP-alpha-D-glucose = [(1-&gt;4)-alpha-D-glucosyl](n+1) + ADP + H(+). It participates in glycan biosynthesis; glycogen biosynthesis. Its function is as follows. Synthesizes alpha-1,4-glucan chains using ADP-glucose. The sequence is that of Probable glycogen synthase (glgA) from Methanocaldococcus jannaschii (strain ATCC 43067 / DSM 2661 / JAL-1 / JCM 10045 / NBRC 100440) (Methanococcus jannaschii).